A 79-amino-acid chain; its full sequence is Dermaseptin-S8 (79 aa).

The N-terminal stretch at Met1–Cys22 is a signal peptide. Positions Glu23–Arg45 are excised as a propeptide. Glutamine amide is present on Gln76. The propeptide occupies Ala78 to Gln79.

It belongs to the frog skin active peptide (FSAP) family. Dermaseptin subfamily. In terms of tissue distribution, expressed by the skin glands.

The protein localises to the secreted. Its function is as follows. Potent antimicrobial peptide with activity against bacteria, fungi and protozoa. Probably acts by disturbing membrane functions with its amphipathic structure. This chain is Dermaseptin-S8, found in Phyllomedusa sauvagei (Sauvage's leaf frog).